Reading from the N-terminus, the 943-residue chain is Isoleucine--tRNA ligase (943 aa).

A 'HIGH' region motif is present at residues 58–68 (PYANGSIHIGH). Residue Glu567 participates in L-isoleucyl-5'-AMP binding. The short motif at 608–612 (KMSKS) is the 'KMSKS' region element. Lys611 serves as a coordination point for ATP. Cys906, Cys909, Cys926, and Cys929 together coordinate Zn(2+).

This sequence belongs to the class-I aminoacyl-tRNA synthetase family. IleS type 1 subfamily. In terms of assembly, monomer. The cofactor is Zn(2+).

The protein resides in the cytoplasm. It catalyses the reaction tRNA(Ile) + L-isoleucine + ATP = L-isoleucyl-tRNA(Ile) + AMP + diphosphate. Its function is as follows. Catalyzes the attachment of isoleucine to tRNA(Ile). As IleRS can inadvertently accommodate and process structurally similar amino acids such as valine, to avoid such errors it has two additional distinct tRNA(Ile)-dependent editing activities. One activity is designated as 'pretransfer' editing and involves the hydrolysis of activated Val-AMP. The other activity is designated 'posttransfer' editing and involves deacylation of mischarged Val-tRNA(Ile). This is Isoleucine--tRNA ligase from Ectopseudomonas mendocina (strain ymp) (Pseudomonas mendocina).